The chain runs to 331 residues: PTS-dependent dihydroxyacetone kinase 2, dihydroxyacetone-binding subunit DhaK (331 aa).

In terms of domain architecture, DhaK spans 7 to 328; the sequence is DGYEAVEEML…LDTPCDTPYF (322 aa). Dihydroxyacetone-binding positions include 55-58 and Asp111; that span reads GSGH. Catalysis depends on His58, which acts as the Proton acceptor. The active-site Tele-hemiaminal-histidine intermediate is the His218.

In terms of assembly, homodimer. The dihydroxyacetone kinase complex is composed of a homodimer of DhaM, a homodimer of DhaK and the subunit DhaL.

The protein localises to the cytoplasm. The enzyme catalyses dihydroxyacetone + phosphoenolpyruvate = dihydroxyacetone phosphate + pyruvate. The protein operates within polyol metabolism; glycerol degradation. Functionally, dihydroxyacetone binding subunit of the dihydroxyacetone kinase, which is responsible for the phosphoenolpyruvate (PEP)-dependent phosphorylation of dihydroxyacetone via a phosphoryl group transfer from DhaL-ATP. The sequence is that of PTS-dependent dihydroxyacetone kinase 2, dihydroxyacetone-binding subunit DhaK from Listeria innocua serovar 6a (strain ATCC BAA-680 / CLIP 11262).